Consider the following 212-residue polypeptide: MHETRLLPQPHDLLWGMSTDRLDAAAPTWAAEVLAAGRPVVVRRAPARDGWIAVGVRGHGREQRHAAWMPRAAIRRRVQPEQLTGGGEREGVCAPLRALALLQPQLDALCRQRGLAWGVTGGAGYQLATGVTVLGEHSDLDLLLRVPRPLERRQALALLERLEQLPCRVDLQLETPAGAVALRDWASPAARVLLKAGSGARLVGDPWREVAA.

Active-site residues include D139 and D141.

The protein belongs to the MdcG family.

It carries out the reaction apo-[malonate decarboxylase ACP] + 2'-(5''-triphospho-alpha-D-ribosyl)-3'-dephospho-CoA = holo-[malonate decarboxylase ACP] + diphosphate. Transfers 2'-(5-triphosphoribosyl)-3'-dephosphocoenzyme-A to the apo-[acyl-carrier-protein] of the malonate decarboxylase to yield holo-[acyl-carrier-protein]. This Azotobacter vinelandii (strain DJ / ATCC BAA-1303) protein is Phosphoribosyl-dephospho-CoA transferase.